The sequence spans 220 residues: MELGLGGLSTLSHCPWPRQQPALWPTLAALALLSSVAEASLGSAPRSPAPREGPPPVLASPAGHLPGGRTARWCSGRARRPPPQPSRPAPPPPAPPSALPRGGRAARAGGPGSRARAAGARGCRLRSQLVPVRALGLGHRSDELVRFRFCSGSCRRARSPHDLSLASLLGAGALRPPPGSRPVSQPCCRPTRYEAVSFMDVNSTWRTVDRLSATACGCLG.

The signal sequence occupies residues Met1–Ala39. The propeptide occupies Ser40–Arg107. The tract at residues Leu41 to Arg121 is disordered. 2 stretches are compositionally biased toward pro residues: residues Ser47–Leu58 and Pro81–Ala98. A compositionally biased stretch (low complexity) spans Leu99–Arg121. 3 disulfides stabilise this stretch: Cys123/Cys188, Cys150/Cys216, and Cys154/Cys218. N-linked (GlcNAc...) asparagine glycosylation occurs at Asn202.

It belongs to the TGF-beta family. GDNF subfamily. Homodimer; disulfide-linked. Interacts with GFRA3 coreceptor and RET: forms a 2:2:2 ternary complex composed of ARTN ligand, GFRA3 and RET receptor. Ubiquitous. Expressed at high levels in peripheral tissues including prostate, placenta, pancreas, heart, kidney, pituitary gland, lung and testis. Expressed at low levels in the brain.

The protein resides in the secreted. Growth factor that supports the survival of sensory and sympathetic peripheral neurons in culture and also supports the survival of dopaminergic neurons of the ventral mid-brain. Acts by binding to its coreceptor, GFRA3, leading to autophosphorylation and activation of the RET receptor. Strong attractant of gut hematopoietic cells thus promoting the formation Peyer's patch-like structures, a major component of the gut-associated lymphoid tissue. The protein is Artemin of Homo sapiens (Human).